The chain runs to 262 residues: Nodulation protein J (262 aa).

In terms of domain architecture, ABC transmembrane type-2 spans 33–259 (ASILGNLAEP…FLSVGLLQRR (227 aa)). The next 6 membrane-spanning stretches (helical) occupy residues 35–55 (ILGN…GLGA), 62–82 (GIPY…MISA), 125–145 (ALLA…ASWP), 147–167 (VLFA…LAMI), 177–197 (YFIF…GAVF), and 236–256 (LHIS…VGLL).

This sequence belongs to the ABC-2 integral membrane protein family. Lipooligosaccharide exporter (TC 3.A.1.102) subfamily. In terms of assembly, the complex is composed of two ATP-binding proteins (NodI) and two transmembrane proteins (NodJ).

Its subcellular location is the cell inner membrane. In terms of biological role, part of the ABC transporter complex NodIJ involved in the export of the nodulation factors (Nod factors), the bacterial signal molecules that induce symbiosis and subsequent nodulation induction. Nod factors are LCO (lipo-chitin oligosaccharide), a modified beta-1,4-linked N-acetylglucosamine oligosaccharide. This subunit encodes the transporter. The chain is Nodulation protein J (nodJ) from Sinorhizobium fredii (strain NBRC 101917 / NGR234).